The chain runs to 126 residues: Large ribosomal subunit protein bL17 (126 aa).

It belongs to the bacterial ribosomal protein bL17 family. Part of the 50S ribosomal subunit. Contacts protein L32.

The polypeptide is Large ribosomal subunit protein bL17 (Lysinibacillus sphaericus (strain C3-41)).